The primary structure comprises 976 residues: Ephrin type-A receptor 2 (976 aa).

A signal peptide spans 1–23 (MELWAARACFVLLWGCALAPATA). The tract at residues 1–206 (MELWAARACF…YYKKCPELLQ (206 aa)) is mediates interaction with CLDN4. Over 25 to 537 (QGKEVVLLDF…SPEGSGSLAV (513 aa)) the chain is Extracellular. An Eph LBD domain is found at 28 to 206 (EVVLLDFAAA…YYKKCPELLQ (179 aa)). 2 disulfide bridges follow: Cys-70–Cys-188 and Cys-105–Cys-115. The Fibronectin type-III 1 domain occupies 328 to 432 (PPSAPHYLTA…TSRSFRTASV (105 aa)). Asn-407 and Asn-435 each carry an N-linked (GlcNAc...) asparagine glycan. The region spanning 438–529 (EPPKVRLEGR…KVHEFQTLSP (92 aa)) is the Fibronectin type-III 2 domain. A helical membrane pass occupies residues 538-558 (IGGVAVCVVLLLLLAGAGFFI). At 559–976 (HRRRKNLRAR…DQVNTVGIPI (418 aa)) the chain is on the cytoplasmic side. Ser-570 is modified (phosphoserine). At Tyr-575 the chain carries Phosphotyrosine. At Ser-579 the chain carries Phosphoserine. Tyr-588 carries the phosphotyrosine; by autocatalysis modification. Tyr-594 is modified (phosphotyrosine). The mediates interaction with ARHGEF16 stretch occupies residues 606 to 906 (TEIHPSCVTR…STSGSEGVPF (301 aa)). One can recognise a Protein kinase domain in the interval 613–875 (VTRQKVIGAG…DIVSILDKLI (263 aa)). An ATP-binding site is contributed by 619-627 (IGAGEFGEV). At Tyr-628 the chain carries Phosphotyrosine. Lys-646 contacts ATP. Thr-647 is modified (phosphothreonine). Phosphotyrosine; by autocatalysis is present on Tyr-735. The active-site Proton acceptor is Asp-739. Tyr-772 bears the Phosphotyrosine mark. Ser-869, Ser-892, Ser-897, and Ser-901 each carry phosphoserine. Residues 886 to 976 (DFDPRVSIRL…DQVNTVGIPI (91 aa)) form a negatively regulates interaction with ARHGEF16 region. Residues 904 to 968 (VPFRTVSEWL…AYSLLGLKDQ (65 aa)) enclose the SAM domain. Tyr-921 is modified (phosphotyrosine; by autocatalysis). At Tyr-930 the chain carries Phosphotyrosine. The short motif at 974–976 (IPI) is the PDZ-binding element.

This sequence belongs to the protein kinase superfamily. Tyr protein kinase family. Ephrin receptor subfamily. As to quaternary structure, homodimer. Interacts with SLA. Interacts (phosphorylated form) with VAV2, VAV3 and PI3-kinase p85 subunit (PIK3R1, PIK3R2 or PIK3R3); critical for the EFNA1-induced activation of RAC1 which stimulates cell migration. Interacts with INPPL1; regulates activated EPHA2 endocytosis and degradation. Interacts (inactivated form) with PTK2/FAK1 and interacts (EFNA1 ligand-activated form) with PTPN11; regulates integrin-mediated adhesion. Interacts with ARHGEF16, DOCK4 and ELMO2; mediates ligand-independent activation of RAC1 which stimulates cell migration. Interacts with CLDN4; phosphorylates CLDN4 and may regulate tight junctions. Interacts with ACP1. Interacts with ANKS1A. Interacts with CEMIP. Interacts with NCK1; may regulate EPHA2 activity in cell migration and adhesion. Interacts with TIMD4. Autophosphorylates. Phosphorylated on tyrosine upon binding and activation by EFNA1. Phosphorylated residues Tyr-588 and Tyr-594 are required for binding VAV2 and VAV3 while phosphorylated residues Tyr-735 and Tyr-930 are required for binding PI3-kinase p85 subunit (PIK3R1, PIK3R2 or PIK3R3). These phosphorylated residues are critical for recruitment of VAV2 and VAV3 and PI3-kinase p85 subunit which transduce downstream signaling to activate RAC1 GTPase and cell migration. Dephosphorylation of Tyr-930 by PTPRF prevents the interaction of EPHA2 with NCK1. Phosphorylated at Ser-897 by PKB; serum-induced phosphorylation which targets EPHA2 to the cell leading edge and stimulates cell migration. Phosphorylation by PKB is inhibited by EFNA1-activated EPHA2 which regulates PKB activity via a reciprocal regulatory loop. Phosphorylated at Ser-897 in response to TNF by RPS6KA1 and RPS6KA3; RPS6KA-EPHA2 signaling pathway controls cell migration. Phosphorylated at Ser-897 by PKA; blocks cell retraction induced by EPHA2 kinase activity. Dephosphorylated by ACP1. In terms of processing, ubiquitinated by CHIP/STUB1. Ubiquitination is regulated by the HSP90 chaperone and regulates the receptor stability and activity through proteasomal degradation. ANKS1A prevents ubiquitination and degradation.

The protein localises to the cell membrane. It is found in the cell projection. It localises to the ruffle membrane. The protein resides in the lamellipodium membrane. Its subcellular location is the cell junction. The protein localises to the focal adhesion. The enzyme catalyses L-tyrosyl-[protein] + ATP = O-phospho-L-tyrosyl-[protein] + ADP + H(+). Its function is as follows. Receptor tyrosine kinase which binds promiscuously membrane-bound ephrin-A family ligands residing on adjacent cells, leading to contact-dependent bidirectional signaling into neighboring cells. The signaling pathway downstream of the receptor is referred to as forward signaling while the signaling pathway downstream of the ephrin ligand is referred to as reverse signaling. Activated by the ligand ephrin-A1/EFNA1 regulates migration, integrin-mediated adhesion, proliferation and differentiation of cells. Regulates cell adhesion and differentiation through DSG1/desmoglein-1 and inhibition of the ERK1/ERK2 signaling pathway. May also participate in UV radiation-induced apoptosis and have a ligand-independent stimulatory effect on chemotactic cell migration. During development, may function in distinctive aspects of pattern formation and subsequently in development of several fetal tissues. Involved for instance in angiogenesis, in early hindbrain development and epithelial proliferation and branching morphogenesis during mammary gland development. Engaged by the ligand ephrin-A5/EFNA5 may regulate lens fiber cells shape and interactions and be important for lens transparency development and maintenance. With ephrin-A2/EFNA2 may play a role in bone remodeling through regulation of osteoclastogenesis and osteoblastogenesis. The polypeptide is Ephrin type-A receptor 2 (EPHA2) (Macaca fascicularis (Crab-eating macaque)).